The following is a 57-amino-acid chain: uncharacterized protein (57 aa).

A helical membrane pass occupies residues G15–I37.

It is found in the membrane. This is an uncharacterized protein from Dictyostelium discoideum (Social amoeba).